Consider the following 83-residue polypeptide: Small ribosomal subunit protein bS16 (83 aa).

The protein belongs to the bacterial ribosomal protein bS16 family.

The polypeptide is Small ribosomal subunit protein bS16 (Polaromonas sp. (strain JS666 / ATCC BAA-500)).